The primary structure comprises 351 residues: Glycerol-3-phosphate dehydrogenase [NAD(P)+] (351 aa).

Residues serine 18, tryptophan 19, arginine 38, and lysine 122 each coordinate NADPH. Residues lysine 122, glycine 153, and serine 155 each contribute to the sn-glycerol 3-phosphate site. Alanine 157 serves as a coordination point for NADPH. Sn-glycerol 3-phosphate is bound by residues lysine 208, aspartate 261, serine 271, arginine 272, and asparagine 273. Lysine 208 serves as the catalytic Proton acceptor. Residue arginine 272 coordinates NADPH. Residue glutamate 297 participates in NADPH binding.

The protein belongs to the NAD-dependent glycerol-3-phosphate dehydrogenase family.

The protein resides in the cytoplasm. The catalysed reaction is sn-glycerol 3-phosphate + NAD(+) = dihydroxyacetone phosphate + NADH + H(+). It carries out the reaction sn-glycerol 3-phosphate + NADP(+) = dihydroxyacetone phosphate + NADPH + H(+). It participates in membrane lipid metabolism; glycerophospholipid metabolism. Catalyzes the reduction of the glycolytic intermediate dihydroxyacetone phosphate (DHAP) to sn-glycerol 3-phosphate (G3P), the key precursor for phospholipid synthesis. The sequence is that of Glycerol-3-phosphate dehydrogenase [NAD(P)+] from Bordetella parapertussis (strain 12822 / ATCC BAA-587 / NCTC 13253).